The following is a 105-amino-acid chain: MSASHSLSQSPNLHPDFTYKRQEALWKQLVSAEHRKFCSCGDYTQHFRFPSPVKEDECIRVVGEEGGDGVAVSYHVTKESGDEDPEEVMASIAVGDDGDDDLELW.

This is an uncharacterized protein from Felis catus (Cat).